A 595-amino-acid polypeptide reads, in one-letter code: Chaperone protein HscA homolog (595 aa).

It belongs to the heat shock protein 70 family.

In terms of biological role, chaperone involved in the maturation of iron-sulfur cluster-containing proteins. Has a low intrinsic ATPase activity which is markedly stimulated by HscB. In Rickettsia rickettsii (strain Iowa), this protein is Chaperone protein HscA homolog.